Reading from the N-terminus, the 456-residue chain is MEIYLDNLWDQVLERLQLQLSKPTFETWIKTATAEQLENNCLVIRAPNPFARNWLQKYYIKTIADVVHDILGYPVEIYLTTFLVEDSRKNDSGLIWSEHKSVNILGENLSIPKPLPANLNAKYMFSRFVVGPNNRMAHAASLAVAESPGQEFNPLFLCGGVGLGKTHLMQAIGHYRLDIFPHSQIFYVSTEKFTNDLIAAIRKDSLQGFREHYRAADVLLVDDIQFIEGKEYTQEEFFHTFNTLHEAGKQVVLASDRPPNQIPSLQERLCSRFSMGLIADIQAPDLETRMAILLKKSEYENMVLPRDVIEYIATRYPSNIRELEGALTRVVTYISISGLPMTVENIAPILNPKTEKLEASPEAVIKVVSENFNLSIEDLKGSSRKREITLARQVGMYLMRQHTDLSLPKIGEVFGGKDHTTVLYSCDKISQLQNSDLNLVQTIRQLSDRINFSSRH.

Residues 1-73 (MEIYLDNLWD…ADVVHDILGY (73 aa)) form a domain I, interacts with DnaA modulators region. Residues 73–117 (YPVEIYLTTFLVEDSRKNDSGLIWSEHKSVNILGENLSIPKPLPA) are domain II. Residues 118–334 (NLNAKYMFSR…GALTRVVTYI (217 aa)) are domain III, AAA+ region. ATP is bound by residues Gly162, Gly164, Lys165, and Thr166. Positions 335–456 (SISGLPMTVE…SDRINFSSRH (122 aa)) are domain IV, binds dsDNA.

It belongs to the DnaA family. As to quaternary structure, oligomerizes as a right-handed, spiral filament on DNA at oriC.

The protein localises to the cytoplasm. Functionally, plays an essential role in the initiation and regulation of chromosomal replication. ATP-DnaA binds to the origin of replication (oriC) to initiate formation of the DNA replication initiation complex once per cell cycle. Binds the DnaA box (a 9 base pair repeat at the origin) and separates the double-stranded (ds)DNA. Forms a right-handed helical filament on oriC DNA; dsDNA binds to the exterior of the filament while single-stranded (ss)DNA is stabiized in the filament's interior. The ATP-DnaA-oriC complex binds and stabilizes one strand of the AT-rich DNA unwinding element (DUE), permitting loading of DNA polymerase. After initiation quickly degrades to an ADP-DnaA complex that is not apt for DNA replication. Binds acidic phospholipids. This Trichodesmium erythraeum (strain IMS101) protein is Chromosomal replication initiator protein DnaA.